The primary structure comprises 241 residues: Zinc finger CCHC domain-containing protein 24 (241 aa).

Residues Ser65 and Ser93 each carry the phosphoserine modification. The CCHC-type zinc finger occupies Tyr132 to Gln149.

The sequence is that of Zinc finger CCHC domain-containing protein 24 from Mus musculus (Mouse).